A 166-amino-acid polypeptide reads, in one-letter code: Protein SprT (166 aa).

One can recognise a SprT-like domain in the interval 19–164 (RDALARANLK…CVRCGDTLVA (146 aa)). Zn(2+) is bound at residue His78. The active site involves Glu79. His82 provides a ligand contact to Zn(2+).

Belongs to the SprT family. The cofactor is Zn(2+).

The protein resides in the cytoplasm. This is Protein SprT from Cronobacter sakazakii (strain ATCC BAA-894) (Enterobacter sakazakii).